We begin with the raw amino-acid sequence, 103 residues long: Large ribosomal subunit protein eL42 (103 aa).

Zn(2+)-binding residues include C18 and C21. A C4-type zinc finger spans residues 18-81 (CPKCRTHTEH…TVLKLKCSKC (64 aa)). A disordered region spans residues 40 to 62 (LSEGERRYARKKKGYGSKRKPEQ). The span at 47 to 57 (YARKKKGYGSK) shows a compositional bias: basic residues. C78 and C81 together coordinate Zn(2+).

It belongs to the eukaryotic ribosomal protein eL42 family. As to quaternary structure, part of the 50S ribosomal subunit. The cofactor is Zn(2+).

Binds to the 23S rRNA. The chain is Large ribosomal subunit protein eL42 from Desulfurococcus amylolyticus (strain DSM 18924 / JCM 16383 / VKM B-2413 / 1221n) (Desulfurococcus kamchatkensis).